We begin with the raw amino-acid sequence, 743 residues long: MASKSRRLSGLEISLIVLFLLMTAVSVALITVLALKQESDKKEEVTPEEPSPSVTPPEKPYLIGVGRADCTGPVADLPMMGYANTDQTARGLHTRLFSRAFIVDDGNKRVVFVTSDIGMVSQRLRLEVFQALKEKYGDLYRQDNVVLSGTHTHSGVGGYFQYTLFMITSKGYIKPSIQAIVSGIVKSIDIAHRNLRPGRIFINKGQVADSNFNRSPHSYMNNPEEERNRYEFNTDKQIVVLKFTDLDGDGIGLLSWFAVHPVSMNYTNRMVSSDNLGYASYIFEQEKNIGFLPGEKGPFVAGFSSSNLGDSSPNIRGPVCVNTGLKCDYINSSCPVGGKKACIAFGPGEDMFESTRIIGENMFKIAKELYGSAKQELHGPVYGAHQWVNMTDETVQFNSTHTGRTCKPALGHSFAAGTTDGGGEFNFLQGDTEGDPFWDGIRDAVLGPPSNETKACHQPKPILFSTGEMDSPLPWHPAIVDVQIITIGSLAVVAVPGEFTTMSGRRIREAVKRELEVKEPFTNAEVVVAGLCNIYTHYITTYEEYQIQRYEGASTIFGPHTLSAYIQRYRGLAKAIAHGTIGELPKGPEPPFFDEDKLFNQVRDPVADVAPVGTTFGDVLQEVNPVYKVGEIASVTFVSGNPRHSGDIRDTTLVTVERFHNDTGSWEIIHNDASWETRFHWIKGLAGRSQAKVEWHIPQTAQAGTYQIQYFGHYKQTTENTTVITPYVGTSAAFKVARSFYYF.

At 1-14 (MASKSRRLSGLEIS) the chain is on the cytoplasmic side. A helical; Signal-anchor for type II membrane protein transmembrane segment spans residues 15-35 (LIVLFLLMTAVSVALITVLAL). The Lumenal segment spans residues 36-743 (KQESDKKEEV…FKVARSFYYF (708 aa)). The disordered stretch occupies residues 40–60 (DKKEEVTPEEPSPSVTPPEKP). Positions 49–59 (EPSPSVTPPEK) are enriched in pro residues. Residues His-151 and His-260 each coordinate Zn(2+). A glycan (N-linked (GlcNAc...) asparagine) is linked at Asn-265. Residue Ser-312 is the Nucleophile of the active site. 2 disulfides stabilise this stretch: Cys-320-Cys-334 and Cys-327-Cys-342. Asn-331, Asn-389, Asn-398, and Asn-451 each carry an N-linked (GlcNAc...) asparagine glycan. Cys-406 and Cys-456 are joined by a disulfide. Residues Glu-498 and Tyr-538 each coordinate Zn(2+). Asn-661 carries N-linked (GlcNAc...) asparagine glycosylation. Ca(2+) contacts are provided by Asp-672, Ser-674, and Thr-677. An N-linked (GlcNAc...) asparagine glycan is attached at Asn-720.

The protein belongs to the neutral ceramidase family. It depends on Zn(2+) as a cofactor. N-glycosylated. In terms of processing, O-glycosylated. In terms of tissue distribution, detected in intestine (at protein level).

It localises to the cell membrane. The protein localises to the membrane raft. The protein resides in the membrane. It is found in the caveola. Its subcellular location is the golgi apparatus membrane. It localises to the mitochondrion. The protein localises to the secreted. The protein resides in the extracellular exosome. The catalysed reaction is an N-acylsphing-4-enine + H2O = sphing-4-enine + a fatty acid. It catalyses the reaction N-dodecanoylsphing-4-enine + H2O = dodecanoate + sphing-4-enine. It functions in the pathway lipid metabolism; sphingolipid metabolism. Plasma membrane ceramidase that hydrolyzes sphingolipid ceramides into sphingosine and free fatty acids at neutral pH. Ceramides, sphingosine, and its phosphorylated form sphingosine-1-phosphate are bioactive lipids that mediate cellular signaling pathways regulating several biological processes including cell proliferation, apoptosis and differentiation. Also catalyzes the reverse reaction allowing the synthesis of ceramides from fatty acids and sphingosine. Together with sphingomyelinase, participates in the production of sphingosine and sphingosine-1-phosphate from the degradation of sphingomyelin, a sphingolipid enriched in the plasma membrane of cells. Also participates in the hydrolysis of ceramides from the extracellular milieu allowing the production of sphingosine-1-phosphate inside and outside cells. The protein is Neutral ceramidase (asah2) of Danio rerio (Zebrafish).